Consider the following 290-residue polypeptide: 33 kDa chaperonin (290 aa).

Disulfide bonds link Cys235–Cys237 and Cys268–Cys271.

The protein belongs to the HSP33 family. Post-translationally, under oxidizing conditions two disulfide bonds are formed involving the reactive cysteines. Under reducing conditions zinc is bound to the reactive cysteines and the protein is inactive.

Its subcellular location is the cytoplasm. In terms of biological role, redox regulated molecular chaperone. Protects both thermally unfolding and oxidatively damaged proteins from irreversible aggregation. Plays an important role in the bacterial defense system toward oxidative stress. This Streptococcus pyogenes serotype M6 (strain ATCC BAA-946 / MGAS10394) protein is 33 kDa chaperonin.